The primary structure comprises 424 residues: L-threonine:uridine-5'-aldehyde transaldolase (424 aa).

Lysine 235 bears the N6-(pyridoxal phosphate)lysine mark.

It belongs to the SHMT family. Requires pyridoxal 5'-phosphate as cofactor.

It carries out the reaction uridine-5'-aldehyde + L-threonine = (5'S,6'S)-C-glycyluridine + acetaldehyde. It participates in antibiotic biosynthesis. In terms of biological role, transaldolase involved in the biosynthesis of the lipopeptidyl nucleoside antibiotic A-90289. Catalyzes the condensation of L-threonine and uridine-5'-aldehyde to form 5'-C-glycyluridine (GlyU). Forms (5'S,6'S)-GlyU. Has no activity with alternative amino acids, such as glycine or serine. The protein is L-threonine:uridine-5'-aldehyde transaldolase of Streptomyces sp.